The sequence spans 429 residues: Transcription factor IIIA (429 aa).

The disordered stretch occupies residues M1–R45. Residues S24–N44 show a composition bias toward low complexity. C2H2-type zinc fingers lie at residues Y49–H74, F80–H102, F108–H130, F134–H159, L163–H186, Y194–H219, L222–H244, W253–H277, and Y365–H389. Residues K406–P416 are compositionally biased toward basic and acidic residues. Positions K406 to K429 are disordered.

It localises to the nucleus. In terms of biological role, interacts with the internal control region (ICR) of approximately 50 bases within the 5S RNA genes, is required for correct transcription of these genes by RNA polymerase III. Also binds the transcribed 5S RNA's. This chain is Transcription factor IIIA (PZF1), found in Saccharomyces cerevisiae (strain ATCC 204508 / S288c) (Baker's yeast).